Consider the following 67-residue polypeptide: DNA-directed RNA polymerases I, II, and III subunit RPABC5 (67 aa).

Zn(2+) is bound by residues Cys7, Cys10, Cys44, and Cys45.

This sequence belongs to the archaeal Rpo10/eukaryotic RPB10 RNA polymerase subunit family. In terms of assembly, component of the RNA polymerase I (Pol I), RNA polymerase II (Pol II) and RNA polymerase III (Pol III) complexes consisting of at least 13, 12 and 17 subunits, respectively.

Its subcellular location is the nucleus. Functionally, DNA-dependent RNA polymerase catalyzes the transcription of DNA into RNA using the four ribonucleoside triphosphates as substrates. Common component of RNA polymerases I, II and III which synthesize ribosomal RNA precursors, mRNA precursors and many functional non-coding RNAs, and a small RNAs, such as 5S rRNA and tRNAs, respectively. Pol II is the central component of the basal RNA polymerase II transcription machinery. Pols are composed of mobile elements that move relative to each other. In Pol II, Polr2L is part of the core element with the central large cleft. The polypeptide is DNA-directed RNA polymerases I, II, and III subunit RPABC5 (Drosophila melanogaster (Fruit fly)).